A 189-amino-acid chain; its full sequence is Rho-related protein racM (189 aa).

12–19 (GDYGVGKT) is a GTP binding site. Residues 35 to 43 (YVPTALDNF) carry the Effector region motif. Residues 60–64 (DTAGG) and 118–121 (TKID) each bind GTP. Cysteine 186 is modified (cysteine methyl ester). Cysteine 186 carries the S-geranylgeranyl cysteine lipid modification. A propeptide spans 187-189 (IIL) (removed in mature form).

The protein belongs to the small GTPase superfamily. Rho family.

The protein localises to the cell membrane. The sequence is that of Rho-related protein racM (racM) from Dictyostelium discoideum (Social amoeba).